The sequence spans 103 residues: UPF0235 protein Rleg2_3707 (103 aa).

The protein belongs to the UPF0235 family.

This chain is UPF0235 protein Rleg2_3707, found in Rhizobium leguminosarum bv. trifolii (strain WSM2304).